The chain runs to 236 residues: Protein EVI2A (236 aa).

The N-terminal stretch at 1–30 (MPTDMEHTGHYLHLAFLMTTVFSLSPGTKA) is a signal peptide. Residues asparagine 31, asparagine 38, asparagine 49, asparagine 73, and asparagine 112 are each glycosylated (N-linked (GlcNAc...) asparagine). The Extracellular segment spans residues 31-133 (NYTRLWANST…DVCAENNNNM (103 aa)). Residues 134-154 (AMLICLIIIAVLFLICTFLFL) form a helical membrane-spanning segment. Residues 155–236 (STVVLANKVS…TEKLTNKQIG (82 aa)) lie on the Cytoplasmic side of the membrane. Serine 211 carries the post-translational modification Phosphoserine. Residues 217-236 (ATRERKDEEGTEKLTNKQIG) are disordered. Residues 218–236 (TRERKDEEGTEKLTNKQIG) are compositionally biased toward basic and acidic residues.

This sequence belongs to the EVI2A family.

It localises to the membrane. May complex with itself or/and other proteins within the membrane, to function as part of a cell-surface receptor. The sequence is that of Protein EVI2A (EVI2A) from Homo sapiens (Human).